The chain runs to 350 residues: Serine-threonine kinase receptor-associated protein (350 aa).

WD repeat units lie at residues 12 to 56 (GHTR…GTFL), 57 to 96 (GHKG…ELIT), 98 to 137 (AHKH…AEPD), 141 to 179 (GHTS…EVKA), 180 to 212 (LNVA…HSAE), 221 to 262 (EAPA…ESYK), and 263 to 302 (GHFG…TYGL). A disordered region spans residues 311–350 (ENAEAAKARTTLPGTAEEEIEEVASENSDSVYSSTPEVKA). The span at 335–350 (SENSDSVYSSTPEVKA) shows a compositional bias: polar residues.

The protein belongs to the WD repeat STRAP family. Part of the core SMN complex.

Its subcellular location is the cytoplasm. It localises to the nucleus. Functionally, the SMN complex catalyzes the assembly of small nuclear ribonucleoproteins (snRNPs), the building blocks of the spliceosome, and thereby plays an important role in the splicing of cellular pre-mRNAs. Most spliceosomal snRNPs contain a common set of Sm proteins SNRPB, SNRPD1, SNRPD2, SNRPD3, SNRPE, SNRPF and SNRPG that assemble in a heptameric protein ring on the Sm site of the small nuclear RNA to form the core snRNP (Sm core). In the cytosol, the Sm proteins SNRPD1, SNRPD2, SNRPE, SNRPF and SNRPG are trapped in an inactive 6S pICln-Sm complex by the chaperone CLNS1A that controls the assembly of the core snRNP. To assemble core snRNPs, the SMN complex accepts the trapped 5Sm proteins from CLNS1A forming an intermediate. Binding of snRNA inside 5Sm triggers eviction of the SMN complex, thereby allowing binding of SNRPD3 and SNRPB to complete assembly of the core snRNP. STRAP plays a role in the cellular distribution of the SMN complex. This is Serine-threonine kinase receptor-associated protein (STRAP) from Gallus gallus (Chicken).